The chain runs to 329 residues: Phosphate import ATP-binding protein PstB (329 aa).

The ABC transporter domain occupies 83 to 325; the sequence is FEIENLNFWY…PKQKETNRYI (243 aa). ATP is bound at residue 116-123; the sequence is GKSGCGKS.

This sequence belongs to the ABC transporter superfamily. Phosphate importer (TC 3.A.1.7) family. In terms of assembly, the complex is composed of two ATP-binding proteins (PstB), two transmembrane proteins (PstC and PstA) and a solute-binding protein (PstS).

Its subcellular location is the cell membrane. It carries out the reaction phosphate(out) + ATP + H2O = ADP + 2 phosphate(in) + H(+). Part of the ABC transporter complex PstSACB involved in phosphate import. Responsible for energy coupling to the transport system. The chain is Phosphate import ATP-binding protein PstB from Mycoplasma pneumoniae (strain ATCC 29342 / M129 / Subtype 1) (Mycoplasmoides pneumoniae).